Consider the following 99-residue polypeptide: YcgL domain-containing protein HD_1373 (99 aa).

Positions 8 to 92 (NFCAIYKSMS…PAENLLKQFL (85 aa)) constitute a YcgL domain.

The protein is YcgL domain-containing protein HD_1373 of Haemophilus ducreyi (strain 35000HP / ATCC 700724).